A 1222-amino-acid polypeptide reads, in one-letter code: MLFNINEKGEPLVISFAPFLSPEAIKHLQENERCSDQSQKRTAQQIEAIYTSGQNILVSASAGSGKTFVMVERILDKILRGVSIDRLFISTFTVKAATELRERIENKLYSQIAQTTDFQMKVYLTEQLQSLCQADIGTMDAFAQKVVSRYGYSIGISSQFRIMQDKAEQDVLKQEVFSKLFSEFMNQKEAPVFRALVKNFSGNCKDTSAFRELVYTCYSFSQSTENPKIWLQENFLSAAKTYQRLEDIPDHDIELLLLAMQDTANQLRDVTDMEDYGQLTKAGSRSAKYTKHLTIIEKLSDWVRDFKCLYGKAGLDRLIRDVTGLIPSGNDVTVSKVKYPVFKTLHQKLKQFRHLETILMYQKDCFPLLEQLQDFVLAFSEAYLAVKIQESAFEFSDIAHFAIKILEENTDIRQSYQQHYHEVMVDEYQDNNHMQERLLTLLSNGHNRFMVGDIKQSIYRFRQADPQIFNQKFRDYQKKTEQGKVILLKENFRSQSEVLNVSNAVFSHLMDESVGDVLYDEQHQLIAGSHAQTVPYLDRRAQLLLYNSDKDDGNAPSDSEGISFSEVTIVAKEIIKLHNDKGVPFEDITLLVSSRTRNDIISHTFNQYGIPIVTDGGQQNYLKSVEVMVMLDTLRTINNPRNDYALVALLRSPMFAFDEDDLARIALQKDNELDKDCLYDKIQRAVIGRGAYPELIHDTLLGKLNVFLKTLKSWRRYAKLGSLYDLILENFHERFYFDFVASQAKAEQAQANLYALALRANQFEKSGYKGLYRFIKMIDKVLETQNDLADVEVATPKQAVNLMTIHKSKGLQFPYVFILNCDKRFSMTDIHKSFILNRQHGIGIKYLADIKGLLGETTLNSVKVSMETLPYQLNKQELRLATLSEEMRLLYVAMTRAEKKVYFIGKASKSKSQEITDPKKLGKLLPLALREQLLTFQDWLLAIADIFSTEDLYFDVRFIEDSDLTQESVGRLQTPQLLNPDDLKDNRQSETIARALDMLEAVSQLNANYEAAIHLPTVRTPSQLKATYEPLLEPIGVDIIEKSSRSLSDFTLPHFSKKAKVEASHIGSALHQLMQVLPLSKPINQQTLLDALRGIDSNEEVKTALDLKKIESFFCDTSLGQFFQTYQKHLYREAPFAILKLDPISQEEYVLRGIIDAYFLFDDHIVLVDYKTDKYKQPIELKKRYQQQLELYAEALTQTYKLPVTKRYLVLMGGGKPEIVEV.

A UvrD-like helicase ATP-binding domain is found at Gln39–Gln495. Position 60 to 67 (Ala60 to Thr67) interacts with ATP. The UvrD-like helicase C-terminal domain maps to Gln524–Gly810.

The protein belongs to the helicase family. AddA subfamily. As to quaternary structure, heterodimer of AddA and AddB/RexB. Mg(2+) serves as cofactor.

The enzyme catalyses Couples ATP hydrolysis with the unwinding of duplex DNA by translocating in the 3'-5' direction.. It catalyses the reaction ATP + H2O = ADP + phosphate + H(+). Its function is as follows. The heterodimer acts as both an ATP-dependent DNA helicase and an ATP-dependent, dual-direction single-stranded exonuclease. Recognizes the chi site generating a DNA molecule suitable for the initiation of homologous recombination. The AddA nuclease domain is required for chi fragment generation; this subunit has the helicase and 3' -&gt; 5' nuclease activities. This chain is ATP-dependent helicase/nuclease subunit A, found in Streptococcus pyogenes serotype M49 (strain NZ131).